Consider the following 282-residue polypeptide: Nucleotide-binding protein in ptsN-ptsO intergenic region (282 aa).

8–15 (GRSGSGKS) contributes to the ATP binding site. 56-59 (DVRN) contacts GTP.

This sequence belongs to the RapZ-like family.

Functionally, displays ATPase and GTPase activities. This chain is Nucleotide-binding protein in ptsN-ptsO intergenic region, found in Shewanella violacea.